The primary structure comprises 257 residues: Aspartate/glutamate leucyltransferase (257 aa).

It belongs to the R-transferase family. Bpt subfamily.

It localises to the cytoplasm. It carries out the reaction N-terminal L-glutamyl-[protein] + L-leucyl-tRNA(Leu) = N-terminal L-leucyl-L-glutamyl-[protein] + tRNA(Leu) + H(+). It catalyses the reaction N-terminal L-aspartyl-[protein] + L-leucyl-tRNA(Leu) = N-terminal L-leucyl-L-aspartyl-[protein] + tRNA(Leu) + H(+). In terms of biological role, functions in the N-end rule pathway of protein degradation where it conjugates Leu from its aminoacyl-tRNA to the N-termini of proteins containing an N-terminal aspartate or glutamate. This is Aspartate/glutamate leucyltransferase from Rhodopseudomonas palustris (strain BisB5).